Reading from the N-terminus, the 353-residue chain is Photosystem II protein D1 (353 aa).

Position 2 is an N-acetylthreonine (T2). T2 is modified (phosphothreonine). 3 helical membrane passes run Y29–S46, H118–L133, and W142–A156. Chlorophyll a is bound at residue H118. Y126 lines the pheophytin a pocket. [CaMn4O5] cluster is bound by residues D170 and E189. The chain crosses the membrane as a helical span at residues F197–L218. H198 provides a ligand contact to chlorophyll a. A quinone-binding positions include H215 and S264–F265. H215 contacts Fe cation. H272 is a binding site for Fe cation. Residues F274–L288 form a helical membrane-spanning segment. Positions 332, 333, 342, and 344 each coordinate [CaMn4O5] cluster. Residues V345–G353 constitute a propeptide that is removed on maturation.

Belongs to the reaction center PufL/M/PsbA/D family. As to quaternary structure, PSII is composed of 1 copy each of membrane proteins PsbA, PsbB, PsbC, PsbD, PsbE, PsbF, PsbH, PsbI, PsbJ, PsbK, PsbL, PsbM, PsbT, PsbX, PsbY, PsbZ, Psb30/Ycf12, at least 3 peripheral proteins of the oxygen-evolving complex and a large number of cofactors. It forms dimeric complexes. The D1/D2 heterodimer binds P680, chlorophylls that are the primary electron donor of PSII, and subsequent electron acceptors. It shares a non-heme iron and each subunit binds pheophytin, quinone, additional chlorophylls, carotenoids and lipids. D1 provides most of the ligands for the Mn4-Ca-O5 cluster of the oxygen-evolving complex (OEC). There is also a Cl(-1) ion associated with D1 and D2, which is required for oxygen evolution. The PSII complex binds additional chlorophylls, carotenoids and specific lipids. serves as cofactor. Tyr-161 forms a radical intermediate that is referred to as redox-active TyrZ, YZ or Y-Z. In terms of processing, C-terminally processed by CTPA; processing is essential to allow assembly of the oxygen-evolving complex and thus photosynthetic growth.

Its subcellular location is the plastid. It is found in the chloroplast thylakoid membrane. It carries out the reaction 2 a plastoquinone + 4 hnu + 2 H2O = 2 a plastoquinol + O2. In terms of biological role, photosystem II (PSII) is a light-driven water:plastoquinone oxidoreductase that uses light energy to abstract electrons from H(2)O, generating O(2) and a proton gradient subsequently used for ATP formation. It consists of a core antenna complex that captures photons, and an electron transfer chain that converts photonic excitation into a charge separation. The D1/D2 (PsbA/PsbD) reaction center heterodimer binds P680, the primary electron donor of PSII as well as several subsequent electron acceptors. The polypeptide is Photosystem II protein D1 (Aethionema cordifolium (Lebanon stonecress)).